A 375-amino-acid chain; its full sequence is 4,4'-diaponeurosporenoate glycosyltransferase (375 aa).

The next 4 membrane-spanning stretches (helical) occupy residues 3 to 23 (WLSRILTVIVAMSMACGALIF), 164 to 184 (FYEGFSAIFNLMTVVGMNVFS), 277 to 297 (IMAAIVLWLFGSIASILGLCL), and 330 to 350 (FSNLLMVCHPLLFMFFTKIFI).

This sequence belongs to the glycosyltransferase 2 family. CrtQ subfamily.

The protein localises to the cell membrane. Its pathway is carotenoid biosynthesis; staphyloxanthin biosynthesis; staphyloxanthin from farnesyl diphosphate: step 4/5. Functionally, catalyzes the glycosylation of 4,4'-diaponeurosporenoate, i.e. the esterification of glucose at the C1'' position with the carboxyl group of 4,4'-diaponeurosporenic acid, to form glycosyl-4,4'-diaponeurosporenoate. This is a step in the biosynthesis of staphyloxanthin, an orange pigment present in most staphylococci strains. This is 4,4'-diaponeurosporenoate glycosyltransferase (crtQ) from Staphylococcus aureus (strain bovine RF122 / ET3-1).